We begin with the raw amino-acid sequence, 447 residues long: MFRWIAIGVLSVAVIGTAVWGYNEYSEKNEIKIQAENEYQRSFHELTYYMDLLNDEIGTALAMNSKERLSPQFVDIWRLTSQAHSNVGQLPLGLLPFHKTEQFLSDIGEFTYQTAVRNLDDNPLTEEETQKLKDYYDQSGQIKDELRQVQHVALEEGLNWMDVELALSDENAQQDNTIVNGFQTVEKSVEGFGQADPENSTISTNTQDHSYKNLTGSEVTENEALQRAMEIFEIKDKDLLSISKSGEGADTPLYSISYNKDEEHGYMDMAIKGGHPLNLLVSREMKEKKVSLNEGSEKAKDYLASFGLEDMTLFQSSEYDHIGVYSYLYNDNGVRVYSDAVEVKVGLDNGDLLGLTTNSYFMNHTDREIPEPKISEDEARDNVNSTVDIQESHLAIIDNNAGEEVLTYEFLGIMDDETYRIFINAENGQEELVEKLDGKEVNYNSVL.

It belongs to the YpeB family.

Its function is as follows. Required for spore cortex hydrolysis during germination. Appears to be required for either expression, localization, activation or function of SleB. In Oceanobacillus iheyensis (strain DSM 14371 / CIP 107618 / JCM 11309 / KCTC 3954 / HTE831), this protein is Sporulation protein YpeB.